We begin with the raw amino-acid sequence, 231 residues long: Ion-translocating oxidoreductase complex subunit E (231 aa).

The next 6 membrane-spanning stretches (helical) occupy residues 18–38 (ALVQ…ATNA), 39–59 (LGLG…ISTL), 63–83 (TPAE…VSAV), 86–106 (LINA…PLIV), 125–145 (ALSA…MFVL), and 182–202 (PFLL…MLAG).

It belongs to the NqrDE/RnfAE family. As to quaternary structure, the complex is composed of six subunits: RsxA, RsxB, RsxC, RsxD, RsxE and RsxG.

It localises to the cell inner membrane. Functionally, part of a membrane-bound complex that couples electron transfer with translocation of ions across the membrane. Required to maintain the reduced state of SoxR. The polypeptide is Ion-translocating oxidoreductase complex subunit E (Escherichia coli O6:H1 (strain CFT073 / ATCC 700928 / UPEC)).